Consider the following 361-residue polypeptide: MLYEILYSLSDYISGLNVFKYITFRTMLAILTSFFFTFIIAPPCIRWLKKLSLTQHIRDDGPKTHLKKEGTPTMGGIIITASVLVAVLMWGNLKNHYMWIMIISFLGFGLIGFIDDYLKITRKNYKGLPGRYKLFAQLLLASSVTLFLYFNPKDPYTTVLSIPFFKQWLIDLGIFYLPFAIFVIVGSSNAVNLTDGMDGLAAGLVGIASIVNAVLLYISGHAVFAKYLYVLYIPGTGELAVFCGAMLGACLGFLWYNSYPAEVFMGDVGSLSLGGALGSLAVITKHEIVLALVGGIFVVEALSVILQVGYFKLTNGKRIFRMAPLHHHFELKKWPEPKVIVRFWIIGIILALLSLLTLKLR.

10 helical membrane-spanning segments follow: residues 28-48 (LAILTSFFFTFIIAPPCIRWL), 73-93 (TMGGIIITASVLVAVLMWGNL), 98-118 (MWIMIISFLGFGLIGFIDDYL), 132-152 (YKLFAQLLLASSVTLFLYFNP), 168-188 (WLIDLGIFYLPFAIFVIVGSS), 199-219 (GLAAGLVGIASIVNAVLLYIS), 235-255 (GTGELAVFCGAMLGACLGFLW), 263-283 (VFMGDVGSLSLGGALGSLAVI), 288-308 (IVLALVGGIFVVEALSVILQV), and 338-358 (KVIVRFWIIGIILALLSLLTL).

Belongs to the glycosyltransferase 4 family. MraY subfamily. Requires Mg(2+) as cofactor.

It is found in the cell inner membrane. The catalysed reaction is UDP-N-acetyl-alpha-D-muramoyl-L-alanyl-gamma-D-glutamyl-meso-2,6-diaminopimeloyl-D-alanyl-D-alanine + di-trans,octa-cis-undecaprenyl phosphate = di-trans,octa-cis-undecaprenyl diphospho-N-acetyl-alpha-D-muramoyl-L-alanyl-D-glutamyl-meso-2,6-diaminopimeloyl-D-alanyl-D-alanine + UMP. It participates in cell wall biogenesis; peptidoglycan biosynthesis. Catalyzes the initial step of the lipid cycle reactions in the biosynthesis of the cell wall peptidoglycan: transfers peptidoglycan precursor phospho-MurNAc-pentapeptide from UDP-MurNAc-pentapeptide onto the lipid carrier undecaprenyl phosphate, yielding undecaprenyl-pyrophosphoryl-MurNAc-pentapeptide, known as lipid I. This Thermodesulfovibrio yellowstonii (strain ATCC 51303 / DSM 11347 / YP87) protein is Phospho-N-acetylmuramoyl-pentapeptide-transferase.